A 316-amino-acid chain; its full sequence is Glutamyl-Q tRNA(Asp) synthetase (316 aa).

Residues 13–17 (RFAPS) and aspartate 49 contribute to the L-glutamate site. A 'HIGH' region motif is present at residues 16–26 (PSPSGDLHFGS). Zn(2+) contacts are provided by cysteine 105, cysteine 107, tyrosine 119, and cysteine 123. The L-glutamate site is built by tyrosine 176 and arginine 194. The 'KMSKS' region motif lies at 232 to 236 (KLSKQ). An ATP-binding site is contributed by lysine 235.

Belongs to the class-I aminoacyl-tRNA synthetase family. GluQ subfamily. Zn(2+) serves as cofactor.

Catalyzes the tRNA-independent activation of glutamate in presence of ATP and the subsequent transfer of glutamate onto a tRNA(Asp). Glutamate is transferred on the 2-amino-5-(4,5-dihydroxy-2-cyclopenten-1-yl) moiety of the queuosine in the wobble position of the QUC anticodon. The chain is Glutamyl-Q tRNA(Asp) synthetase from Photorhabdus laumondii subsp. laumondii (strain DSM 15139 / CIP 105565 / TT01) (Photorhabdus luminescens subsp. laumondii).